The primary structure comprises 93 residues: UPF0473 protein RBAM_024480 (93 aa).

This sequence belongs to the UPF0473 family.

This is UPF0473 protein RBAM_024480 from Bacillus velezensis (strain DSM 23117 / BGSC 10A6 / LMG 26770 / FZB42) (Bacillus amyloliquefaciens subsp. plantarum).